A 204-amino-acid polypeptide reads, in one-letter code: Lysozyme g (204 aa).

A signal peptide spans 1 to 19; that stretch reads MHLMLVLLGLAALLGTSQS. 2 disulfide bridges follow: Cys-23/Cys-79 and Cys-37/Cys-48. Active-site residues include Glu-92 and Asp-105.

Belongs to the glycosyl hydrolase 23 family.

It localises to the secreted. The catalysed reaction is Hydrolysis of (1-&gt;4)-beta-linkages between N-acetylmuramic acid and N-acetyl-D-glucosamine residues in a peptidoglycan and between N-acetyl-D-glucosamine residues in chitodextrins.. Functionally, has bacteriolytic activity against M.luteus. This Struthio camelus (Common ostrich) protein is Lysozyme g.